We begin with the raw amino-acid sequence, 292 residues long: Small ribosomal subunit biogenesis GTPase RsgA (292 aa).

A CP-type G domain is found at 65–223 (KTELIRPTVA…VVDTPGFSSL (159 aa)). GTP is bound by residues 114–117 (NKLD) and 165–173 (GPSGVGKST). Zn(2+) is bound by residues cysteine 247, cysteine 252, histidine 254, and cysteine 260.

Belongs to the TRAFAC class YlqF/YawG GTPase family. RsgA subfamily. Monomer. Associates with 30S ribosomal subunit, binds 16S rRNA. The cofactor is Zn(2+).

The protein resides in the cytoplasm. Functionally, one of several proteins that assist in the late maturation steps of the functional core of the 30S ribosomal subunit. Helps release RbfA from mature subunits. May play a role in the assembly of ribosomal proteins into the subunit. Circularly permuted GTPase that catalyzes slow GTP hydrolysis, GTPase activity is stimulated by the 30S ribosomal subunit. The protein is Small ribosomal subunit biogenesis GTPase RsgA of Alkaliphilus metalliredigens (strain QYMF).